Consider the following 506-residue polypeptide: MSFSVEVLAGIAIELQRGIGHQDRFQRLITTLRQVLACDASALLRYESRQFIPLAIDGLAQDVLGRRFTLEGHPRLEAIARAGDVVRFPADSDLPDPYDGLIPGQESLKVHACVGLPLFAGQNLIGALTLDAMTPEQFEVFSDEELRLVAALAAGALSNALLIEQLESQNMLPGSSGVFEPIKETHMIGLSPAMTQLKKEIEIVAGSDLNVLIGGETGTGKELVAKAIHQSSPRAVNPLVYLNCAALPESVAESELFGHVKGAFTGAISNRSGKFEMADNGTLFLDEIGELSLALQAKLLRVLQYGDIQRVGDDRSLRVDVRVLAATNRDLREEVLAGRFRADLFYRLSVFPLFVPPLRERGDDVVLLAGYFCEQCRLRLGLSRVVLSPGARRHLLNYGWPGNVRELEHAIHRAVVLARATRAGDEVVLEEQHFALSEDVLPAPSAESFLALPACRNLRESTENFQREMIRQALAQNNHNWAASARALETDVANLHRLAKRLGLKD.

4-aspartylphosphate is present on Asp57. The Sigma-54 factor interaction domain maps to 187 to 416 (MIGLSPAMTQ…LEHAIHRAVV (230 aa)). ATP is bound by residues 215–222 (GETGTGKE) and 278–287 (ADNGTLFLDE). The segment at residues 481-500 (WAASARALETDVANLHRLAK) is a DNA-binding region (H-T-H motif).

Its pathway is nitrogen metabolism; nitric oxide reduction. Its function is as follows. Required for the expression of anaerobic nitric oxide (NO) reductase, acts as a transcriptional activator for at least the norVW operon. Activation also requires sigma-54. This Salmonella paratyphi C (strain RKS4594) protein is Anaerobic nitric oxide reductase transcription regulator NorR.